The following is a 140-amino-acid chain: Actin-depolymerizing factor 8 (140 aa).

Ser-6 is modified (phosphoserine). Residues 7–139 (GMHVNDECKI…SLDIIKGRLN (133 aa)) enclose the ADF-H domain.

Belongs to the actin-binding proteins ADF family. Expressed in the root trichoblast cells and developed root hairs.

Its subcellular location is the cytoplasm. It localises to the cytoskeleton. Functionally, actin-depolymerizing protein. Severs actin filaments (F-actin) and binds to actin monomers. The polypeptide is Actin-depolymerizing factor 8 (ADF8) (Arabidopsis thaliana (Mouse-ear cress)).